Here is a 1316-residue protein sequence, read N- to C-terminus: DNA-directed RNA polymerase subunit beta' (1316 aa).

Positions 60, 62, 75, and 78 each coordinate Zn(2+). Mg(2+)-binding residues include Asp-535, Asp-537, and Asp-539. Cys-891, Cys-968, Cys-975, and Cys-978 together coordinate Zn(2+).

This sequence belongs to the RNA polymerase beta' chain family. As to quaternary structure, the RNAP catalytic core consists of 2 alpha, 1 beta, 1 beta' and 1 omega subunit. When a sigma factor is associated with the core the holoenzyme is formed, which can initiate transcription. Mg(2+) is required as a cofactor. Requires Zn(2+) as cofactor.

It carries out the reaction RNA(n) + a ribonucleoside 5'-triphosphate = RNA(n+1) + diphosphate. In terms of biological role, DNA-dependent RNA polymerase catalyzes the transcription of DNA into RNA using the four ribonucleoside triphosphates as substrates. The sequence is that of DNA-directed RNA polymerase subunit beta' from Mycobacterium avium (strain 104).